The chain runs to 471 residues: MDILCEENTSLSSTTNSLMQLNEDTRLYSNDFNSGEANTSDAFNWTVESENRTNLSCEGCLSPSCLSLLHLQEKNWSALLTAVVIILTIAGNILVIMAVSLEKKLQNATNYFLMSLAIADMLLGFLVMPVSMLTILYGYRWPLPSKLCAVWIYLDVLFSTASIMHLCAISLDRYVAIQNPIHHSRFNSRTKAFLKIIAVWTISVGISMPIPVFGLQDDSKVFKEGSCLLADDNFVLIGSFVSFFIPLTIMVITYFLTIKSLQKEATLCVSDLGTRAKLASFSFLPQSSLSSEKLFQRSIHRDPGSYTGRRTMQSISNEQKACKVLGIVFFLFVVMWCPFFITNIMAVICKESCNEDVIGALLNVFVWIGYLSSAVNPLVYTLFNKTYRSAFSRYIQCQYKENKKPLQLILVNTIPALAYKSSQLQMGQKKNSKQDAKTTDNDCSMVALGKQHSEDASKDNSDGVNEKVSCV.

Topologically, residues 1 to 80 are extracellular; it reads MDILCEENTS…LQEKNWSALL (80 aa). Asn8, Asn38, Asn44, Asn51, and Asn54 each carry an N-linked (GlcNAc...) asparagine glycan. A helical transmembrane segment spans residues 81–97; that stretch reads TAVVIILTIAGNILVIM. The Cytoplasmic portion of the chain corresponds to 98 to 111; it reads AVSLEKKLQNATNY. The helical transmembrane segment at 112-137 threads the bilayer; it reads FLMSLAIADMLLGFLVMPVSMLTILY. Residues 138–146 are Extracellular-facing; sequence GYRWPLPSK. A helical membrane pass occupies residues 147–171; sequence LCAVWIYLDVLFSTASIMHLCAISL. An intrachain disulfide couples Cys148 to Cys227. Asp155 is a serotonin binding site. The short motif at 172 to 174 is the DRY motif; important for ligand-induced conformation changes element; it reads DRY. The Cytoplasmic segment spans residues 172 to 191; that stretch reads DRYVAIQNPIHHSRFNSRTK. Residues 192–215 form a helical membrane-spanning segment; that stretch reads AFLKIIAVWTISVGISMPIPVFGL. At 216 to 232 the chain is on the extracellular side; it reads QDDSKVFKEGSCLLADD. A helical transmembrane segment spans residues 233-258; the sequence is NFVLIGSFVSFFIPLTIMVITYFLTI. At 259–322 the chain is on the cytoplasmic side; it reads KSLQKEATLC…QSISNEQKAC (64 aa). Ser280 is subject to Phosphoserine. A helical transmembrane segment spans residues 323–348; sequence KVLGIVFFLFVVMWCPFFITNIMAVI. Residue Asn343 coordinates serotonin. A disulfide bridge links Cys349 with Cys353. Residues 349-356 lie on the Extracellular side of the membrane; it reads CKESCNED. A helical transmembrane segment spans residues 357–382; that stretch reads VIGALLNVFVWIGYLSSAVNPLVYTL. Positions 376-380 match the NPxxY motif; important for ligand-induced conformation changes and signaling motif; that stretch reads NPLVY. Residues 383-471 are Cytoplasmic-facing; sequence FNKTYRSAFS…DGVNEKVSCV (89 aa). The tract at residues 450–471 is disordered; that stretch reads KQHSEDASKDNSDGVNEKVSCV. Positions 451-465 are enriched in basic and acidic residues; that stretch reads QHSEDASKDNSDGVN. A PDZ-binding motif is present at residues 469–471; that stretch reads SCV.

This sequence belongs to the G-protein coupled receptor 1 family. Interacts (via C-terminus) with MPDZ and PATJ. May interact (via C-terminus) with MPP3, PRDX6, DLG4, DLG1, CASK, APBA1 and MAGI2. Interacts with GRM2 and DRD2; this may affect signaling.

It is found in the cell membrane. The protein resides in the cell projection. Its subcellular location is the dendrite. It localises to the axon. The protein localises to the cytoplasmic vesicle. It is found in the membrane. The protein resides in the caveola. Its subcellular location is the presynapse. Its activity is regulated as follows. G-protein coupled receptor activity is regulated by lipids: oleamide increases HTR2A-mediated activity. In terms of biological role, G-protein coupled receptor for 5-hydroxytryptamine (serotonin). Also functions as a receptor for various drugs and psychoactive substances, including mescaline, psilocybin, 1-(2,5-dimethoxy-4-iodophenyl)-2-aminopropane (DOI) and lysergic acid diethylamide (LSD). Ligand binding causes a conformation change that triggers signaling via guanine nucleotide-binding proteins (G proteins) and modulates the activity of downstream effectors. HTR2A is coupled to G(q)/G(11) G alpha proteins and activates phospholipase C-beta, releasing diacylglycerol (DAG) and inositol 1,4,5-trisphosphate (IP3) second messengers that modulate the activity of phosphatidylinositol 3-kinase and promote the release of Ca(2+) ions from intracellular stores, respectively. Beta-arrestin family members inhibit signaling via G proteins and mediate activation of alternative signaling pathways. Affects neural activity, perception, cognition and mood. Plays a role in the regulation of behavior, including responses to anxiogenic situations and psychoactive substances. Plays a role in intestinal smooth muscle contraction, and may play a role in arterial vasoconstriction. The sequence is that of 5-hydroxytryptamine receptor 2A (HTR2A) from Macaca mulatta (Rhesus macaque).